The chain runs to 381 residues: RING-H2 finger protein ATL1 (381 aa).

Positions 1–31 (MDLTDRRNPFNNLVFPPPPPPPSTTFTSPIF) are disordered. The chain crosses the membrane as a helical span at residues 46 to 66 (IAVIGILATAFLLVSYYIFVI). The RING-type; atypical zinc-finger motif lies at 134–176 (CSVCLNEFQEDEKLRIIPNCCHVFHIDCIDIWLQGNANCPLCR). Disordered stretches follow at residues 249 to 269 (TSNE…PIKF) and 334 to 354 (RQIP…GNSR). Over residues 250–261 (SNEVSTGNSPKS) the composition is skewed to polar residues.

Belongs to the RING-type zinc finger family. ATL subfamily.

It localises to the membrane. It carries out the reaction S-ubiquitinyl-[E2 ubiquitin-conjugating enzyme]-L-cysteine + [acceptor protein]-L-lysine = [E2 ubiquitin-conjugating enzyme]-L-cysteine + N(6)-ubiquitinyl-[acceptor protein]-L-lysine.. The protein operates within protein modification; protein ubiquitination. This chain is RING-H2 finger protein ATL1 (ATL1), found in Arabidopsis thaliana (Mouse-ear cress).